A 341-amino-acid chain; its full sequence is Anthranilate phosphoribosyltransferase (341 aa).

5-phospho-alpha-D-ribose 1-diphosphate contacts are provided by residues G80, 83 to 84, T88, 90 to 93, 108 to 116, and S120; these read GD, NIST, and KHGNRAVSS. Residue G80 participates in anthranilate binding. Residue S92 coordinates Mg(2+). N111 is a binding site for anthranilate. Position 166 (R166) interacts with anthranilate. Mg(2+) is bound by residues D225 and E226.

It belongs to the anthranilate phosphoribosyltransferase family. Homodimer. Mg(2+) serves as cofactor.

It catalyses the reaction N-(5-phospho-beta-D-ribosyl)anthranilate + diphosphate = 5-phospho-alpha-D-ribose 1-diphosphate + anthranilate. The protein operates within amino-acid biosynthesis; L-tryptophan biosynthesis; L-tryptophan from chorismate: step 2/5. Functionally, catalyzes the transfer of the phosphoribosyl group of 5-phosphorylribose-1-pyrophosphate (PRPP) to anthranilate to yield N-(5'-phosphoribosyl)-anthranilate (PRA). This chain is Anthranilate phosphoribosyltransferase, found in Brevibacillus brevis (strain 47 / JCM 6285 / NBRC 100599).